The sequence spans 178 residues: CDP-archaeol synthase (178 aa).

5 helical membrane-spanning segments follow: residues 3-23, 56-76, 91-111, 123-143, and 149-169; these read LLLLLFSAIWYILPAYVANAV, FFGILFGIITGILQHFIVILY, IILGFLLGTGALFGDMLGSFI, APLLDQMTFIVFALIFAYPLY, and LMVILLVISPIIHFSSNIIAY.

This sequence belongs to the CDP-archaeol synthase family. Mg(2+) is required as a cofactor.

The protein resides in the cell membrane. The catalysed reaction is 2,3-bis-O-(geranylgeranyl)-sn-glycerol 1-phosphate + CTP + H(+) = CDP-2,3-bis-O-(geranylgeranyl)-sn-glycerol + diphosphate. It functions in the pathway membrane lipid metabolism; glycerophospholipid metabolism. Functionally, catalyzes the formation of CDP-2,3-bis-(O-geranylgeranyl)-sn-glycerol (CDP-archaeol) from 2,3-bis-(O-geranylgeranyl)-sn-glycerol 1-phosphate (DGGGP) and CTP. This reaction is the third ether-bond-formation step in the biosynthesis of archaeal membrane lipids. In Methanococcus maripaludis (strain C7 / ATCC BAA-1331), this protein is CDP-archaeol synthase.